We begin with the raw amino-acid sequence, 1912 residues long: Methylcytosine dioxygenase TET2 (1912 aa).

Positions 1 to 11 are enriched in basic and acidic residues; the sequence is MEQDRTTHAEG. A disordered region spans residues 1 to 86; that stretch reads MEQDRTTHAE…PHEDRGYSRC (86 aa). S15 and S23 each carry phosphoserine. A compositionally biased stretch (polar residues) spans 53–74; sequence TKWQSSQSCYGISHMKGSQSSH. Phosphoserine occurs at positions 76 and 97. 8 disordered regions span residues 112–166, 340–359, 367–388, 429–470, 673–723, 832–862, 907–966, and 1009–1052; these read LDQK…FPTR, DRNLQASHGSSEQYSKQKET, SSKFPKDSISPTTVTPPSQSLL, IDHQ…PEKS, PQTQ…DKQR, EQAQKPQQASSLQGLKDRSQGESPAPPAEAA, QEQQ…NGQP, and ESEN…EGCN. Polar residues-rich tracts occupy residues 135-158, 340-353, 367-387, 434-447, and 673-689; these read SRQPNVSGLSDNGEPVTSTTQESS, DRNLQASHGSSEQY, SSKFPKDSISPTTVTPPSQSL, KTSSSQSLNPSVHT, and PQTQASQTPASQNSNFP. The segment covering 690–701 has biased composition (low complexity); sequence QICQQQQQQQLQ. Polar residues-rich tracts occupy residues 707–719 and 832–844; these read QMPQTFSHLQGSN and EQAQKPQQASSLQ. The segment covering 907–921 has biased composition (low complexity); the sequence is QEQQQTQQSQPGHNQ. Polar residues-rich tracts occupy residues 944–966 and 1036–1046; these read PQENMSSRIKQEISSPSRDNGQP and SDTPGEQSQNG. Phosphoserine is present on S1036. Positions 1048, 1106, 1132, and 1134 each coordinate Zn(2+). Residue R1174 participates in 2-oxoglutarate binding. Positions 1184, 1186, 1202, and 1211 each coordinate Zn(2+). Positions 1203–1216 are interaction with DNA; sequence SWSMYYNGCKFARS. Residue K1212 forms a Glycyl lysine isopeptide (Lys-Gly) (interchain with G-Cter in ubiquitin) linkage. C1271 serves as a coordination point for Zn(2+). C1287 is a 2-oxoglutarate binding site. Position 1293 (H1293) interacts with Zn(2+). Fe cation-binding residues include H1295 and D1297. N1300 lines the substrate pocket. Position 1329 (H1329) interacts with 2-oxoglutarate. Disordered stretches follow at residues 1379–1414 and 1444–1514; these read KKKAEPKKAKTKKAARKRSSLENCSSRTEKGKSSSH and LQRH…HTSD. A compositionally biased stretch (basic residues) spans 1387–1396; sequence AKTKKAARKR. Over residues 1456–1473 the composition is skewed to pro residues; it reads QPQPPQPQPQTTPQPQPQ. A compositionally biased stretch (polar residues) spans 1480–1512; that stretch reads GNSQSVGSHCSGSTSVYTRQPTPHSPYPSSAHT. Position 1795 (H1795) interacts with Fe cation. 1810 to 1812 is a binding site for 2-oxoglutarate; the sequence is RIS. 1816 to 1818 serves as a coordination point for substrate; it reads YRH. Residue H1826 coordinates Zn(2+). The span at 1842–1866 shows a compositional bias: basic and acidic residues; it reads EEECGKNGSDHVSQKNHGKQEKREP. The tract at residues 1842 to 1871 is disordered; sequence EEECGKNGSDHVSQKNHGKQEKREPTGPQE.

Belongs to the TET family. As to quaternary structure, interacts with HCFC1. Interacts with OGT. Interacts with PROSER1; this interaction mediates TET2 O-GlcNAcylation and stability by promoting the interaction between OGT and TET2. Directly interacts (via C-terminus) with the DCAF1 component of the CRL4(VprBP) E3 ubiquitin-protein ligase complex. It depends on Fe(2+) as a cofactor. Requires Zn(2+) as cofactor. May be glycosylated. It is unclear whether interaction with OGT leads to GlcNAcylation. According to a report, it is GlcNAcylated by OGT. In contrast, another group reports no GlcNAcylation by OGT in human ortholog. Post-translationally, monoubiquitinated at Lys-1212 by the DCX (DDB1-CUL4-X-box) E3 ubiquitin-protein ligase complex called CRL4(VprBP) or CUL4A-RBX1-DDB1-DCAF1/VPRBP complex; this modification promotes binding to DNA. In terms of processing, acetylated. In terms of tissue distribution, expressed in the brain, kidney, heart, lung, muscle and stomach. Expressed in germinal vesicle (GV) stage and MII-stage oocytes and in early embryos. Present in embryonic stem cells (ES cells).

Its subcellular location is the nucleus. The protein resides in the chromosome. It carries out the reaction a 5-methyl-2'-deoxycytidine in DNA + 2-oxoglutarate + O2 = a 5-hydroxymethyl-2'-deoxycytidine in DNA + succinate + CO2. The catalysed reaction is a 5-hydroxymethyl-2'-deoxycytidine in DNA + 2-oxoglutarate + O2 = a 5-formyl-2'-deoxycytidine in DNA + succinate + CO2 + H2O. It catalyses the reaction a 5-formyl-2'-deoxycytidine in DNA + 2-oxoglutarate + O2 = a 5-carboxyl-2'-deoxycytidine in DNA + succinate + CO2 + H(+). Its function is as follows. Dioxygenase that catalyzes the conversion of the modified genomic base 5-methylcytosine (5mC) into 5-hydroxymethylcytosine (5hmC) and plays a key role in active DNA demethylation. Has a preference for 5-hydroxymethylcytosine in CpG motifs. Also mediates subsequent conversion of 5hmC into 5-formylcytosine (5fC), and conversion of 5fC to 5-carboxylcytosine (5caC). Conversion of 5mC into 5hmC, 5fC and 5caC probably constitutes the first step in cytosine demethylation. Methylation at the C5 position of cytosine bases is an epigenetic modification of the mammalian genome which plays an important role in transcriptional regulation. In addition to its role in DNA demethylation, also involved in the recruitment of the O-GlcNAc transferase OGT to CpG-rich transcription start sites of active genes, thereby promoting histone H2B GlcNAcylation by OGT. This Mus musculus (Mouse) protein is Methylcytosine dioxygenase TET2 (Tet2).